The chain runs to 152 residues: MVHATSPLLLLLLLSLALVAPGLSARKCSLTGKWTNDLGSNMTIGAVNSRGEFTGTYITAVTATSNEIKESPLHGTQNTINKRTQPTFGFTVNWKFSESTTVFTGQCFIDRNGKEVLKTMWLLRSSVNDIGDDWKATRVGINIFTRLRTQKE.

An N-terminal signal peptide occupies residues 1–24; that stretch reads MVHATSPLLLLLLLSLALVAPGLS. The Avidin-like domain occupies 26–149; that stretch reads RKCSLTGKWT…GINIFTRLRT (124 aa). Cysteines 28 and 107 form a disulfide. Asn-41 is a glycosylation site (N-linked (GlcNAc...) asparagine). Residue Tyr-57 coordinates biotin.

This sequence belongs to the avidin/streptavidin family. Homotetramer. Post-translationally, N-linked glycan at Asn-41 consists of GlcNAc(beta1-2)Man(alpha1-3)[GlcNAc(beta1-4)][Man(alpha1-?)Man(alpha1-6)] Man(beta1-4)GlcNAc(beta1-4)GlcNAc. Synthesized in hen oviduct and concentrated in egg white (where it represents 0.05% of the total protein).

The protein localises to the secreted. Functionally, the biological function of avidin is not known. Forms a strong non-covalent specific complex with biotin (one molecule of biotin per subunit of avidin). This Gallus gallus (Chicken) protein is Avidin (AVD).